Here is a 107-residue protein sequence, read N- to C-terminus: Homeobox protein HD-7 (107 aa).

A DNA-binding region (homeobox) is located at residues 21-80 (KPGEKVRKSEFQKEVLKKVYQATPYPTWENKIDIGILISLSPRAVDIWFQNKRHINKGKN).

Its subcellular location is the nucleus. The polypeptide is Homeobox protein HD-7 (HD-7) (Encephalitozoon cuniculi (strain GB-M1) (Microsporidian parasite)).